Reading from the N-terminus, the 316-residue chain is Protoheme IX farnesyltransferase 2 (316 aa).

Positions 1–15 (MEQNLNSEQKPQSSA) are enriched in polar residues. Positions 1 to 24 (MEQNLNSEQKPQSSAKPRGKSSRS) are disordered. 7 helical membrane passes run 62 to 82 (IPEM…AGAF), 117 to 137 (IVML…AAAF), 163 to 183 (IGSI…STDI), 188 to 208 (IARF…AIAI), 231 to 251 (TYYQ…LFGS), 252 to 272 (LSVG…VMSI), and 293 to 313 (LFHM…GVIF).

The protein belongs to the UbiA prenyltransferase family. Protoheme IX farnesyltransferase subfamily. As to quaternary structure, interacts with CtaA.

The protein resides in the cell membrane. The catalysed reaction is heme b + (2E,6E)-farnesyl diphosphate + H2O = Fe(II)-heme o + diphosphate. It participates in porphyrin-containing compound metabolism; heme O biosynthesis; heme O from protoheme: step 1/1. In terms of biological role, converts heme B (protoheme IX) to heme O by substitution of the vinyl group on carbon 2 of heme B porphyrin ring with a hydroxyethyl farnesyl side group. The chain is Protoheme IX farnesyltransferase 2 from Lysinibacillus sphaericus (strain C3-41).